A 136-amino-acid chain; its full sequence is Probable glycine cleavage system H protein 3 (136 aa).

Residues 28-109 (MVTVGITSLG…PYDAWIVKIK (82 aa)) form the Lipoyl-binding domain. K69 carries the N6-lipoyllysine modification.

The protein belongs to the GcvH family. In terms of assembly, the glycine cleavage system is composed of four proteins: P, T, L and H. (R)-lipoate is required as a cofactor.

Its function is as follows. The glycine cleavage system catalyzes the degradation of glycine. The H protein shuttles the methylamine group of glycine from the P protein to the T protein. This Sulfurisphaera tokodaii (strain DSM 16993 / JCM 10545 / NBRC 100140 / 7) (Sulfolobus tokodaii) protein is Probable glycine cleavage system H protein 3.